Here is a 509-residue protein sequence, read N- to C-terminus: RIFRLKKDIFRQQNFVYPLLLQEYIYSLAHYHSFNSLIFYEPVEIIGYDNKFSLVLVKRLITRMYQQKSLISSVNDSNQNEFWGHKNSFSSHFSSQMVSEGFGVILEIPFSSRLVSSLEEKRIPKSQNLRSIHSIFPFLEDKLLHLNYVSDLLIPHPIHLEILVQILQCWIKDVPSLHLLRLFFHEYHNLNSLITSKKSIYVFSKRKKRFFWFLHNSYVYECEYIFLFLRKQSSYLRSISSGVFLERTHFYGKIEYLTVVCCNSFQRILWFLKDTFIHYVRYQGKAILASKGTLILIKKWKFHLVNFWQSYFHFWFQPYRIHIKQLPNYSFSFLGYFSSVLKNPLIVRNQMLENSFLINTLTTKLDTIAPVISIIGSLSKAQFCTVLGHPISKPIWTNLSDSDILDQFCRICRNLCRYHSGSSNKQVLYRIKYILRLSCARTLARKHKSTVRTFMRRLGSGFLEEFFLEEEQSLSLIFLQKIPFPLHGLHRERIWYLDIIRINDLVDHS.

This sequence belongs to the intron maturase 2 family. MatK subfamily.

Its subcellular location is the plastid. The protein resides in the chloroplast. In terms of biological role, usually encoded in the trnK tRNA gene intron. Probably assists in splicing its own and other chloroplast group II introns. In Arpophyllum giganteum (Hyacinth orchid), this protein is Maturase K.